Reading from the N-terminus, the 279-residue chain is Small ribosomal subunit protein uS9m (279 aa).

It belongs to the universal ribosomal protein uS9 family.

The protein localises to the mitochondrion. This Eremothecium gossypii (strain ATCC 10895 / CBS 109.51 / FGSC 9923 / NRRL Y-1056) (Yeast) protein is Small ribosomal subunit protein uS9m (MRPS9).